The primary structure comprises 346 residues: Centromere protein L (346 aa).

Residue Ser41 is modified to Phosphoserine. Thr45 is subject to Phosphothreonine. The residue at position 55 (Ser55) is a Phosphoserine.

This sequence belongs to the CENP-L/IML3 family. As to quaternary structure, component of the CENPA-CAD complex, composed of CENPI, CENPK, CENPL, CENPO, CENPP, CENPQ, CENPR and CENPS. The CENPA-CAD complex interacts with the CENPA-NAC complex, at least composed of CENPA, CENPC, CENPH, CENPM, CENPN, CENPT and CENPU.

Its subcellular location is the nucleus. The protein resides in the chromosome. The protein localises to the centromere. In terms of biological role, component of the CENPA-CAD (nucleosome distal) complex, a complex recruited to centromeres which is involved in assembly of kinetochore proteins, mitotic progression and chromosome segregation. May be involved in incorporation of newly synthesized CENPA into centromeres via its interaction with the CENPA-NAC complex. This chain is Centromere protein L (CENPL), found in Bos taurus (Bovine).